A 78-amino-acid chain; its full sequence is Acyl carrier protein (78 aa).

One can recognise a Carrier domain in the interval 2-77; that stretch reads SEIASRVKAI…DAVSYIEEHA (76 aa). Residue Ser37 is modified to O-(pantetheine 4'-phosphoryl)serine.

It belongs to the acyl carrier protein (ACP) family. In terms of processing, 4'-phosphopantetheine is transferred from CoA to a specific serine of apo-ACP by AcpS. This modification is essential for activity because fatty acids are bound in thioester linkage to the sulfhydryl of the prosthetic group.

The protein localises to the cytoplasm. Its pathway is lipid metabolism; fatty acid biosynthesis. In terms of biological role, carrier of the growing fatty acid chain in fatty acid biosynthesis. The chain is Acyl carrier protein from Bacteroides thetaiotaomicron (strain ATCC 29148 / DSM 2079 / JCM 5827 / CCUG 10774 / NCTC 10582 / VPI-5482 / E50).